A 352-amino-acid chain; its full sequence is MASAEQKHATGNGTTGNGTAMNDVDQPKDAKDLLPHLESLERIIKLPVVNAAWDKSQDVYGKVKGKNRVFEWALTAAEDCVTRAVTTAAPFVTKLDRPIAYVDQTLVKGIDKLEVKAPIIKDTPQEIYNQAKSKVIDVVQPHLERVVKFKAAGQQKAASLKDLAWQKANEVLATQYGSLAVNGVDTTTALAERLLEYYFPKCESDVEEDNDDKQNAVVQNGKSSENDMPVPASEDPVLHTVQTVGRLSNKISRRVYRNVSRQIKQVQKGNINDYLSSLIAALKLHQYINFINSSMGTNVEQSGGSSSDACSPFGTTTSTTTTTTTSSTSNNKPVVALPHVAKSKRAPAVSSQ.

2 disordered regions span residues methionine 1–lysine 28 and asparagine 298–glutamine 352. The segment covering asparagine 298–alanine 309 has biased composition (polar residues). Residues threonine 315–serine 329 are compositionally biased toward low complexity.

Belongs to the perilipin family. Ubiquitous expression in early embryos. At stage 5 expression is restricted to the pole cells. At stage 11 expression is seen in the amnioserosa, refined to the fat body and midgut by stage 14. Also seen in the hindgut by the end of embryogenesis. Expression is seen in larval fat body (at protein level).

The protein localises to the cytoplasm. It localises to the lipid droplet. Its function is as follows. Essential for embryogenesis. Required for normal deposition of neutral lipids in the oocyte. This Drosophila melanogaster (Fruit fly) protein is Lipid storage droplets surface-binding protein 2.